Consider the following 122-residue polypeptide: Large ribosomal subunit protein uL14 (122 aa).

It belongs to the universal ribosomal protein uL14 family. As to quaternary structure, part of the 50S ribosomal subunit. Forms a cluster with proteins L3 and L19. In the 70S ribosome, L14 and L19 interact and together make contacts with the 16S rRNA in bridges B5 and B8.

Functionally, binds to 23S rRNA. Forms part of two intersubunit bridges in the 70S ribosome. This Natranaerobius thermophilus (strain ATCC BAA-1301 / DSM 18059 / JW/NM-WN-LF) protein is Large ribosomal subunit protein uL14.